A 465-amino-acid chain; its full sequence is Ribulose bisphosphate carboxylase large chain (465 aa).

N6,N6,N6-trimethyllysine is present on lysine 4. Positions 113 and 163 each coordinate substrate. Lysine 165 acts as the Proton acceptor in catalysis. Lysine 167 contacts substrate. Mg(2+) is bound by residues lysine 191, aspartate 193, and glutamate 194. Lysine 191 is modified (N6-carboxylysine). The Proton acceptor role is filled by histidine 284. Residues arginine 285, histidine 317, and serine 369 each coordinate substrate.

It belongs to the RuBisCO large chain family. Type I subfamily. As to quaternary structure, heterohexadecamer of 8 large chains and 8 small chains; disulfide-linked. The disulfide link is formed within the large subunit homodimers. Requires Mg(2+) as cofactor. The disulfide bond which can form in the large chain dimeric partners within the hexadecamer appears to be associated with oxidative stress and protein turnover.

It is found in the plastid. The protein resides in the chloroplast. It catalyses the reaction 2 (2R)-3-phosphoglycerate + 2 H(+) = D-ribulose 1,5-bisphosphate + CO2 + H2O. The catalysed reaction is D-ribulose 1,5-bisphosphate + O2 = 2-phosphoglycolate + (2R)-3-phosphoglycerate + 2 H(+). RuBisCO catalyzes two reactions: the carboxylation of D-ribulose 1,5-bisphosphate, the primary event in carbon dioxide fixation, as well as the oxidative fragmentation of the pentose substrate in the photorespiration process. Both reactions occur simultaneously and in competition at the same active site. This Byrsonima crassifolia (Cajuil cimarron) protein is Ribulose bisphosphate carboxylase large chain.